The sequence spans 224 residues: Glycerol-3-phosphate acyltransferase (224 aa).

Transmembrane regions (helical) follow at residues Ile14 to Leu34, Tyr70 to Ala90, Thr99 to Phe119, Ile129 to Ile149, Leu162 to Pro182, and Ile185 to Phe205.

Belongs to the PlsY family. Probably interacts with PlsX.

It localises to the cell inner membrane. The enzyme catalyses an acyl phosphate + sn-glycerol 3-phosphate = a 1-acyl-sn-glycero-3-phosphate + phosphate. The protein operates within lipid metabolism; phospholipid metabolism. Catalyzes the transfer of an acyl group from acyl-phosphate (acyl-PO(4)) to glycerol-3-phosphate (G3P) to form lysophosphatidic acid (LPA). This enzyme utilizes acyl-phosphate as fatty acyl donor, but not acyl-CoA or acyl-ACP. The polypeptide is Glycerol-3-phosphate acyltransferase (Helicobacter hepaticus (strain ATCC 51449 / 3B1)).